An 87-amino-acid chain; its full sequence is Mitochondrial import inner membrane translocase subunit TIM8 (87 aa).

The Twin CX3C motif signature appears at 44 to 68 (CFKNCIHSVQSADLSAQENQCLKDC). 2 cysteine pairs are disulfide-bonded: Cys-44-Cys-68 and Cys-48-Cys-64.

This sequence belongs to the small Tim family. Heterohexamer; composed of 3 copies of TIM8 and 3 copies of TIM13, named soluble 70 kDa complex. Associates with the TIM22 complex, whose core is composed of TIM22 and TIM54. Interacts with the transmembrane regions of multi-pass transmembrane proteins in transit.

It is found in the mitochondrion inner membrane. Mitochondrial intermembrane chaperone that participates in the import and insertion of some multi-pass transmembrane proteins into the mitochondrial inner membrane. Also required for the transfer of beta-barrel precursors from the TOM complex to the sorting and assembly machinery (SAM complex) of the outer membrane. Acts as a chaperone-like protein that protects the hydrophobic precursors from aggregation and guide them through the mitochondrial intermembrane space. The TIM8-TIM13 complex is non essential and only mediates the import of few proteins, while the predominant TIM9-TIM10 70 kDa complex is crucial and mediates the import of much more proteins. The polypeptide is Mitochondrial import inner membrane translocase subunit TIM8 (TIM8) (Eremothecium gossypii (strain ATCC 10895 / CBS 109.51 / FGSC 9923 / NRRL Y-1056) (Yeast)).